A 208-amino-acid chain; its full sequence is Outer-membrane lipoprotein carrier protein (208 aa).

Residues methionine 1 to alanine 22 form the signal peptide.

Belongs to the LolA family. Monomer.

It is found in the periplasm. Functionally, participates in the translocation of lipoproteins from the inner membrane to the outer membrane. Only forms a complex with a lipoprotein if the residue after the N-terminal Cys is not an aspartate (The Asp acts as a targeting signal to indicate that the lipoprotein should stay in the inner membrane). This chain is Outer-membrane lipoprotein carrier protein, found in Shewanella baltica (strain OS195).